The sequence spans 204 residues: Large ribosomal subunit protein eL15 (204 aa).

This sequence belongs to the eukaryotic ribosomal protein eL15 family.

This chain is Large ribosomal subunit protein eL15 (RPL15), found in Tetrahymena thermophila (strain SB210).